Consider the following 691-residue polypeptide: Elongation factor G (691 aa).

Residues E8–I282 form the tr-type G domain. GTP-binding positions include A17–T24, D81–H85, and N135–D138.

Belongs to the TRAFAC class translation factor GTPase superfamily. Classic translation factor GTPase family. EF-G/EF-2 subfamily.

The protein resides in the cytoplasm. Catalyzes the GTP-dependent ribosomal translocation step during translation elongation. During this step, the ribosome changes from the pre-translocational (PRE) to the post-translocational (POST) state as the newly formed A-site-bound peptidyl-tRNA and P-site-bound deacylated tRNA move to the P and E sites, respectively. Catalyzes the coordinated movement of the two tRNA molecules, the mRNA and conformational changes in the ribosome. This chain is Elongation factor G, found in Synechococcus sp. (strain WH7803).